A 215-amino-acid polypeptide reads, in one-letter code: Ion-translocating oxidoreductase complex subunit G (215 aa).

The chain crosses the membrane as a helical span at residues 9 to 29 (GLLLSGFALICTAAVALVNEA). Thr-176 is modified (FMN phosphoryl threonine).

This sequence belongs to the RnfG family. As to quaternary structure, the complex is composed of six subunits: RnfA, RnfB, RnfC, RnfD, RnfE and RnfG. FMN serves as cofactor.

The protein resides in the cell inner membrane. Functionally, part of a membrane-bound complex that couples electron transfer with translocation of ions across the membrane. This Shewanella amazonensis (strain ATCC BAA-1098 / SB2B) protein is Ion-translocating oxidoreductase complex subunit G.